The following is a 275-amino-acid chain: MQNNEIIKPAKYFSELEKSILLALVEKYKYVLECKKSDARTIALKQRTWQALAHEYNSQPSVSLRDFKQLKKCWENIKARTKKIMAHERREKVKRSVSPLLSTHVLGKEKIASMLPEQLYFLQSPPEEEPEYHAEAAAQESFAVSNRELCDDEKEFIHFPVCEGTSQPEPSCSAVRITANKNYRSKTSQEGALKKMHEEEHHQQMSILQLQLIQMNEVHVAKIQQIERECEMAEEEHRIKMEVLNKKKMYWERKLQTFTKEWPVSSFNRPFPNSP.

Residues 13 to 78 (FSELEKSILL…QLKKCWENIK (66 aa)) enclose the Myb-like domain. 2 positions are modified to phosphoserine: serine 96 and serine 98. Residue lysine 154 forms a Glycyl lysine isopeptide (Lys-Gly) (interchain with G-Cter in SUMO2) linkage. Residues 211–247 (QLIQMNEVHVAKIQQIERECEMAEEEHRIKMEVLNKK) are a coiled coil. Serine 274 is modified (phosphoserine).

Belongs to the MSANTD3 family.

This Bos taurus (Bovine) protein is Myb/SANT-like DNA-binding domain-containing protein 3 (MSANTD3).